The following is a 292-amino-acid chain: MDAVLEADTRAVIGEGPLWDEENGRLYWVDILGSELHIFDPEEKINRSIKFKSFVTALAKYSKDELIMTMKDGFYLYHLRDDSLEKIKQPKDMHESLRFNDAKCDPYGRLWAGTTSMEGEQKQASLYRLNLDGSLVKIKDQVSTSNGLDWDRERNLMYYIDTPTQEIVRYSYDPQSGDVSNPEPVYRFDQSDGLPDGMTIDQNGMLWVALFGGSRVVHIDPFQKKEINSISVPAKYVTCCAFGGRDLKTLYITTATEQMTEKERYEQPHAGGLFSAQLETGGYQPVPFAGDV.

The a divalent metal cation site is built by E15, N146, and D196.

Belongs to the SMP-30/CGR1 family. A divalent metal cation is required as a cofactor.

The protein localises to the cytoplasm. The sequence is that of Putative sugar lactone lactonase YvrE (yvrE) from Bacillus subtilis (strain 168).